A 331-amino-acid chain; its full sequence is Lipoate-protein ligase LplJ (331 aa).

One can recognise a BPL/LPL catalytic domain in the interval 27-214 (DPEQQYLLFY…HIFNTNDVGN (188 aa)). ATP-binding positions include Arg69, 74 to 77 (GAVY), and Lys131. Lys131 serves as a coordination point for (R)-lipoate.

The protein belongs to the LplA family.

The protein localises to the cytoplasm. It carries out the reaction L-lysyl-[lipoyl-carrier protein] + (R)-lipoate + ATP = N(6)-[(R)-lipoyl]-L-lysyl-[lipoyl-carrier protein] + AMP + diphosphate + H(+). It functions in the pathway protein modification; protein lipoylation via exogenous pathway; protein N(6)-(lipoyl)lysine from lipoate: step 1/2. It participates in protein modification; protein lipoylation via exogenous pathway; protein N(6)-(lipoyl)lysine from lipoate: step 2/2. Its function is as follows. Catalyzes both the ATP-dependent activation of exogenously supplied lipoate to lipoyl-AMP and the transfer of the activated lipoyl onto the lipoyl domains of lipoate-dependent enzymes. Is also able to use octanoate as substrate. This is Lipoate-protein ligase LplJ (lplJ) from Bacillus subtilis (strain 168).